A 601-amino-acid chain; its full sequence is DNA ligase (601 aa).

Position 258 (Asp258) interacts with ATP. Residue Lys260 is the N6-AMP-lysine intermediate of the active site. Arg265, Arg280, Glu310, Phe350, Arg427, and Lys433 together coordinate ATP. The segment at 568-601 (DKSPEDATTTDEILEMYNKQPKKKIESPPIDESV) is disordered.

This sequence belongs to the ATP-dependent DNA ligase family. It depends on Mg(2+) as a cofactor.

It catalyses the reaction ATP + (deoxyribonucleotide)n-3'-hydroxyl + 5'-phospho-(deoxyribonucleotide)m = (deoxyribonucleotide)n+m + AMP + diphosphate.. In terms of biological role, DNA ligase that seals nicks in double-stranded DNA during DNA replication, DNA recombination and DNA repair. This Saccharolobus islandicus (strain L.S.2.15 / Lassen #1) (Sulfolobus islandicus) protein is DNA ligase.